The primary structure comprises 212 residues: External core antigen (212 aa).

The signal sequence occupies residues 1–19 (MQLFPLCLIISCSCPTVQA). The HBEAG stretch occupies residues 25–27 (GWL). Residues 165 to 212 (NAPILSTLPETTVVRRRGRSPRRRTPSPRRRRSQSPRRRRSQSRESQC) form a disordered region. Basic residues predominate over residues 178–205 (VRRRGRSPRRRTPSPRRRRSQSPRRRRS). One copy of the 1; half-length repeat lies at 184-190 (SPRRRTP). The interval 184–206 (SPRRRTPSPRRRRSQSPRRRRSQ) is 3 X 8 AA repeats of S-P-R-R-R-R-S-Q. Tandem repeats lie at residues 191 to 198 (SPRRRRSQ) and 199 to 206 (SPRRRRSQ).

The protein belongs to the orthohepadnavirus precore antigen family. In terms of assembly, homodimerizes. Post-translationally, phosphorylated. Cleaved by host furin.

It is found in the secreted. It localises to the host nucleus. In terms of biological role, may regulate immune response to the intracellular capsid in acting as a T-cell tolerogen, by having an immunoregulatory effect which prevents destruction of infected cells by cytotoxic T-cells. This immune regulation may predispose to chronicity during perinatal infections and prevent severe liver injury during adult infections. This Hepatitis B virus genotype C subtype ayr (isolate Human/Japan/Okamoto/-) (HBV-C) protein is External core antigen.